We begin with the raw amino-acid sequence, 77 residues long: Thioredoxin (77 aa).

Catalysis depends on nucleophile residues Cys11 and Cys14. Cys11 and Cys14 are disulfide-bonded.

It belongs to the glutaredoxin family.

Its function is as follows. Does not function as a glutathione-disulfide oxidoreductase in the presence of glutathione and glutathione reductase. Has low thioredoxin activity in vitro. The protein is Thioredoxin of Methanothermobacter thermautotrophicus (strain ATCC 29096 / DSM 1053 / JCM 10044 / NBRC 100330 / Delta H) (Methanobacterium thermoautotrophicum).